The chain runs to 660 residues: Pseudouridylate synthase 7 homolog (660 aa).

The segment at Met-1–Ser-99 is disordered. Position 7 is a phosphoserine (Ser-7). The span at Thr-22–Val-32 shows a compositional bias: basic and acidic residues. Positions Gln-76–Ser-99 are enriched in acidic residues. Position 126 is a phosphoserine (Ser-126). Asp-293 functions as the Nucleophile in the catalytic mechanism. Residues Gly-369–Arg-579 form the TRUD domain.

Belongs to the pseudouridine synthase TruD family. In terms of assembly, interacts with SIRT1.

The protein localises to the nucleus. It catalyses the reaction a uridine in tRNA = a pseudouridine in tRNA. The catalysed reaction is uridine(13) in tRNA = pseudouridine(13) in tRNA. The enzyme catalyses a uridine in mRNA = a pseudouridine in mRNA. Its function is as follows. Pseudouridylate synthase that catalyzes pseudouridylation of RNAs. Acts as a regulator of protein synthesis in embryonic stem cells by mediating pseudouridylation of RNA fragments derived from tRNAs (tRFs): pseudouridylated tRFs inhibit translation by targeting the translation initiation complex. Also catalyzes pseudouridylation of mRNAs: mediates pseudouridylation of mRNAs with the consensus sequence 5'-UGUAG-3'. Acts as a regulator of pre-mRNA splicing by mediating pseudouridylation of pre-mRNAs at locations associated with alternatively spliced regions. Pseudouridylation of pre-mRNAs near splice sites directly regulates mRNA splicing and mRNA 3'-end processing. In addition to mRNAs and tRNAs, binds other types of RNAs, such as snRNAs, Y RNAs and vault RNAs, suggesting that it can catalyze pseudouridylation of many RNA types. The chain is Pseudouridylate synthase 7 homolog from Mus musculus (Mouse).